The sequence spans 441 residues: Mannose-6-phosphate isomerase (441 aa).

Residues glutamine 111, histidine 113, glutamate 138, and histidine 285 each coordinate Zn(2+). Arginine 304 is an active-site residue.

This sequence belongs to the mannose-6-phosphate isomerase type 1 family. In terms of assembly, monomer. It depends on Zn(2+) as a cofactor.

The protein localises to the cytoplasm. The enzyme catalyses D-mannose 6-phosphate = D-fructose 6-phosphate. The protein operates within nucleotide-sugar biosynthesis; GDP-alpha-D-mannose biosynthesis; alpha-D-mannose 1-phosphate from D-fructose 6-phosphate: step 1/2. Involved in the synthesis of the GDP-mannose and dolichol-phosphate-mannose required for a number of critical mannosyl transfer reactions. The polypeptide is Mannose-6-phosphate isomerase (PMI1) (Candida albicans (strain SC5314 / ATCC MYA-2876) (Yeast)).